Here is a 298-residue protein sequence, read N- to C-terminus: GTP-binding protein REM 1 (298 aa).

The tract at residues 1–73 (MTLNTEQEAK…DDWSSESSDS (73 aa)) is disordered. Over residues 35–55 (TVPSTQSQHPRLGQSASLNPP) the composition is skewed to polar residues. Ser-51 is modified (phosphoserine). Over residues 63–73 (PDDWSSESSDS) the composition is skewed to low complexity. GTP-binding positions include 87 to 94 (GDPGVGKT) and 195 to 198 (NKAD). Residues 268–287 (ARRFLARLTARSARRRALKA) form a calmodulin-binding region.

It belongs to the small GTPase superfamily. RGK family. In vitro, interacts with calmodulin in a calcium-dependent manner. As to expression, most highly expressed in the endothelial lining of the blood vessels in uterus and heart. Lower levels found in spleen, lymph node, kidney and testis. Also found in cells with secretory function such as the islets of Langerhans, lobule/duct epithelium in the breast, bile duct epithelium in the liver, surface epithelium in the endometrial glands of the uterus, colon mucosa and acinar cells in the pancreas and the prostate.

In terms of biological role, promotes endothelial cell sprouting and actin cytoskeletal reorganization. May be involved in angiogenesis. May function in Ca(2+) signaling. The protein is GTP-binding protein REM 1 (REM1) of Homo sapiens (Human).